A 71-amino-acid chain; its full sequence is DNA-directed RNA polymerase subunit omega (71 aa).

It belongs to the RNA polymerase subunit omega family. In terms of assembly, the RNAP catalytic core consists of 2 alpha, 1 beta, 1 beta' and 1 omega subunit. When a sigma factor is associated with the core the holoenzyme is formed, which can initiate transcription.

It carries out the reaction RNA(n) + a ribonucleoside 5'-triphosphate = RNA(n+1) + diphosphate. Functionally, promotes RNA polymerase assembly. Latches the N- and C-terminal regions of the beta' subunit thereby facilitating its interaction with the beta and alpha subunits. In Levilactobacillus brevis (strain ATCC 367 / BCRC 12310 / CIP 105137 / JCM 1170 / LMG 11437 / NCIMB 947 / NCTC 947) (Lactobacillus brevis), this protein is DNA-directed RNA polymerase subunit omega.